The following is a 398-amino-acid chain: Probable beta-1,3-galactosyltransferase 5 (398 aa).

A helical; Signal-anchor for type II membrane protein membrane pass occupies residues 11 to 31 (LTMTWVPLLCISCFFLGAIFT). 3 N-linked (GlcNAc...) asparagine glycosylation sites follow: Asn110, Asn115, and Asn206.

The protein belongs to the glycosyltransferase 31 family. Mn(2+) serves as cofactor.

The protein localises to the golgi apparatus membrane. It participates in protein modification; protein glycosylation. Its function is as follows. Beta-1,3-galactosyltransferase that transfers galactose from UDP-galactose to substrates with a terminal glycosyl residue. This is Probable beta-1,3-galactosyltransferase 5 (B3GALT5) from Arabidopsis thaliana (Mouse-ear cress).